The following is a 117-amino-acid chain: Flagellar transcriptional regulator FlhD (117 aa).

The protein belongs to the FlhD family. In terms of assembly, homodimer; disulfide-linked. Forms a heterohexamer composed of two FlhC and four FlhD subunits. Each FlhC binds a FlhD dimer, forming a heterotrimer, and a hexamer assembles by dimerization of two heterotrimers.

It is found in the cytoplasm. Functionally, functions in complex with FlhC as a master transcriptional regulator that regulates transcription of several flagellar and non-flagellar operons by binding to their promoter region. Activates expression of class 2 flagellar genes, including fliA, which is a flagellum-specific sigma factor that turns on the class 3 genes. Also regulates genes whose products function in a variety of physiological pathways. The chain is Flagellar transcriptional regulator FlhD from Photorhabdus laumondii subsp. laumondii (strain DSM 15139 / CIP 105565 / TT01) (Photorhabdus luminescens subsp. laumondii).